The primary structure comprises 608 residues: Extracellular metalloproteinase 5 (608 aa).

The N-terminal stretch at Met1–Ala20 is a signal peptide. The propeptide occupies His21–His244. Residue Asn285 is glycosylated (N-linked (GlcNAc...) asparagine). His427 contributes to the Zn(2+) binding site. The active site involves Glu428. His431 is a binding site for Zn(2+). Residue Asn591 is glycosylated (N-linked (GlcNAc...) asparagine).

This sequence belongs to the peptidase M36 family. The cofactor is Zn(2+).

The protein resides in the secreted. Secreted metalloproteinase probably acting as a virulence factor. The sequence is that of Extracellular metalloproteinase 5 (MEP5) from Trichophyton tonsurans (Scalp ringworm fungus).